Here is a 178-residue protein sequence, read N- to C-terminus: Ribosome maturation factor RimM (178 aa).

The PRC barrel domain occupies 100–178; it reads AADEYYWYQL…VMRVEWDADF (79 aa).

It belongs to the RimM family. In terms of assembly, binds ribosomal protein uS19.

It is found in the cytoplasm. Its function is as follows. An accessory protein needed during the final step in the assembly of 30S ribosomal subunit, possibly for assembly of the head region. Essential for efficient processing of 16S rRNA. May be needed both before and after RbfA during the maturation of 16S rRNA. It has affinity for free ribosomal 30S subunits but not for 70S ribosomes. The sequence is that of Ribosome maturation factor RimM from Pseudomonas putida (strain W619).